Reading from the N-terminus, the 397-residue chain is Gamma tubulin complex adapter mto2 (397 aa).

A compositionally biased stretch (basic and acidic residues) spans 1 to 13 (MSEHNYQSDREVA). Disordered regions lie at residues 1–44 (MSEH…WRAG), 269–298 (YTSS…PFPS), and 346–397 (RSDP…TPSP). Polar residues-rich tracts occupy residues 22-37 (ASAN…STPR), 269-281 (YTSS…QRMA), 352-369 (RHVS…SPTS), and 382-397 (SPAS…TPSP). Phosphoserine is present on residues S366 and S396.

In terms of assembly, interacts with mto1; the interaction is direct and required for efficient binding to the gamma-tubulin complex. Interacts with gamma tubulin complex subunits alp4, alp6 and gtb1.

Its subcellular location is the cytoplasm. It localises to the cytoskeleton. It is found in the microtubule organizing center. The protein localises to the spindle pole body. Functionally, acts together with mto1 to promote nucleation of at least a subset of cytoplasmic microtubules, by recruiting the gamma-tubulin complex to the interphase microtubule organizing center (iMTOC) and to the equatorial MTOC (eMTOC) during anaphase. Does not appear to be required for cytoplasmic astral microtubule nucleation from the spindle pole body (SPB). Required to establish the eMTOC, and thereby to tether the cytokinetic actin ring. The sequence is that of Gamma tubulin complex adapter mto2 from Schizosaccharomyces pombe (strain 972 / ATCC 24843) (Fission yeast).